Here is a 670-residue protein sequence, read N- to C-terminus: G-protein coupled receptor moody (670 aa).

Topologically, residues 1–40 (MSDETTISLEDGYPPLEALTTMVPPADATGFSQSLLTFAA) are extracellular. Residues 41-61 (VMTFLIMIVGICGNLLTVVAL) traverse the membrane as a helical segment. Topologically, residues 62 to 69 (LKCPKVRN) are cytoplasmic. The chain crosses the membrane as a helical span at residues 70–90 (VAAAFIISLCIADLLFCALVL). Topologically, residues 91–111 (PFQGLRFVQGTWRHGQVLCRL) are extracellular. Residues C109 and C188 are joined by a disulfide bond. A helical transmembrane segment spans residues 112-132 (IPFIQYGNIGVSLLCIAMITI). Residues 133 to 152 (NRYVMITHHGLYARIYKRHW) are Cytoplasmic-facing. The helical transmembrane segment at 153–173 (IAVMIAACWLFSYGMQLPTLL) threads the bilayer. Over 174-202 (GEWGRFGYDSRLQTCSIMTDDHGHSSKTT) the chain is Extracellular. A helical membrane pass occupies residues 203 to 223 (LFITAFVIPCLVIIACYAKIF). Topologically, residues 224–313 (WVVHKSEQRL…AKRNEWRITK (90 aa)) are cytoplasmic. The disordered stretch occupies residues 258 to 302 (LPSGAECQPSNRVSSDSSSSFSIDVPETAPSGKQQPTRVKDQREV). The span at 267–279 (SNRVSSDSSSSFS) shows a compositional bias: low complexity. Residues 314–334 (MVLAIFLSFVVCYLPITIVKV) traverse the membrane as a helical segment. Over 335-345 (ADKNVEHPSLH) the chain is Extracellular. Residues 346–366 (ICSYILLYLSACINPIIYVIM) form a helical membrane-spanning segment. At 367-670 (NKQYRKAYKT…LTAKMKFPKD (304 aa)) the chain is on the cytoplasmic side. Disordered stretches follow at residues 461–490 (DLIS…GSNS), 562–622 (ELPP…YMNV), and 636–670 (TNAV…FPKD). Positions 564–584 (PPTPPATSAPTTPAPPPPSSP) are enriched in pro residues. Residues 585 to 598 (LHPLSTDSSTTTIS) show a composition bias toward low complexity. Residues 646 to 660 (GPANTSATVSISGSK) are compositionally biased toward polar residues.

It belongs to the G-protein coupled receptor 1 family. In terms of tissue distribution, isoform A and isoform B are expressed in the head. Isoform B only is expressed in the body. Expressed in embryonic glial cells that are involved in ensheathment and insulation of the nervous system. Both isoforms are expressed in glia that insulate the larval and adult nervous system. Also expressed in the germ cells, the gut, and the heart.

It is found in the cell membrane. Isoform A and isoform B are required in glia to regulate the acute sensitivity to cocaine and to continuously maintain the proper blood-brain barrier (BBB) function. A moody-mediated signaling pathway functions in glia to regulate nervous system insulation and drug-related behaviors. Galphai and Galphao, and the regulator of G protein signaling, loco, are required in the surface glia to achieve effective insulation. The components function by regulating the cortical actin and thereby stabilizing the extended morphology of the surface glia, which in turn is necessary for the formation of septate junctions of sufficient length to achieve proper sealing of the nerve cord. The polypeptide is G-protein coupled receptor moody (Drosophila melanogaster (Fruit fly)).